The chain runs to 361 residues: Phosphoserine aminotransferase (361 aa).

Arg-42 contributes to the L-glutamate binding site. Pyridoxal 5'-phosphate is bound by residues 76 to 77, Trp-102, Thr-153, Asp-173, and Gln-196; that span reads AR. An N6-(pyridoxal phosphate)lysine modification is found at Lys-197. Residue 238–239 participates in pyridoxal 5'-phosphate binding; that stretch reads NT.

This sequence belongs to the class-V pyridoxal-phosphate-dependent aminotransferase family. SerC subfamily. Homodimer. The cofactor is pyridoxal 5'-phosphate.

The protein localises to the cytoplasm. The enzyme catalyses O-phospho-L-serine + 2-oxoglutarate = 3-phosphooxypyruvate + L-glutamate. It catalyses the reaction 4-(phosphooxy)-L-threonine + 2-oxoglutarate = (R)-3-hydroxy-2-oxo-4-phosphooxybutanoate + L-glutamate. Its pathway is amino-acid biosynthesis; L-serine biosynthesis; L-serine from 3-phospho-D-glycerate: step 2/3. It functions in the pathway cofactor biosynthesis; pyridoxine 5'-phosphate biosynthesis; pyridoxine 5'-phosphate from D-erythrose 4-phosphate: step 3/5. Its function is as follows. Catalyzes the reversible conversion of 3-phosphohydroxypyruvate to phosphoserine and of 3-hydroxy-2-oxo-4-phosphonooxybutanoate to phosphohydroxythreonine. The protein is Phosphoserine aminotransferase of Mannheimia succiniciproducens (strain KCTC 0769BP / MBEL55E).